The primary structure comprises 534 residues: tRNA uridine(34) acetyltransferase (534 aa).

The radical S-adenosyl-L-methionine (rSAM) stretch occupies residues 70 to 330 (KPVRTISGVA…GEFKPYREEE (261 aa)). One can recognise a Radical SAM core domain in the interval 73 to 344 (RTISGVAVVA…ISYAKSIMPK (272 aa)). Residues C90, C95, and C98 each coordinate [4Fe-4S] cluster. K150 contacts acetyl-CoA. C384 and C389 are joined by a disulfide. The N-acetyltransferase domain maps to 387–534 (IRCREVGHVY…RVGAYMGKEL (148 aa)). Residues 461–464 (QLHV), 485–487 (YGR), and Y518 each bind acetyl-CoA.

The protein belongs to the ELP3 family. [4Fe-4S] cluster is required as a cofactor.

The catalysed reaction is uridine(34) in tRNA + acetyl-CoA + S-adenosyl-L-methionine + H2O = 5-(carboxymethyl)uridine(34) in tRNA + 5'-deoxyadenosine + L-methionine + CoA + 2 H(+). It participates in tRNA modification. Its function is as follows. tRNA uridine(34) acetyltransferase, which mediates formation of carboxymethyluridine in the wobble base at position 34 in tRNAs. The proposed mechanism is the following: (i) recruits S-adenosyl-L-methionine and cleaves it to generate a 5'-deoxyadenosine radical (5'-dA) in the radical S-adenosyl-L-methionine (rSAM) region, (ii) hydrolyzes acetyl-CoA in the N-acetyltransferase domain and (iii) an acetyl radical is formed by the products of the two domains and (iv) is transferred onto the C5 position of uridine(34) in the bound tRNA molecule. Does not show protein lysine acetyltransferase activity. The polypeptide is tRNA uridine(34) acetyltransferase (Methanocaldococcus infernus (strain DSM 11812 / JCM 15783 / ME)).